The sequence spans 444 residues: Tubulin beta chain (444 aa).

The GTP site is built by glutamine 11, glutamate 69, serine 138, glycine 142, threonine 143, glycine 144, asparagine 204, and asparagine 226. Residue glutamate 69 participates in Mg(2+) binding.

Belongs to the tubulin family. Dimer of alpha and beta chains. A typical microtubule is a hollow water-filled tube with an outer diameter of 25 nm and an inner diameter of 15 nM. Alpha-beta heterodimers associate head-to-tail to form protofilaments running lengthwise along the microtubule wall with the beta-tubulin subunit facing the microtubule plus end conferring a structural polarity. Microtubules usually have 13 protofilaments but different protofilament numbers can be found in some organisms and specialized cells. It depends on Mg(2+) as a cofactor.

It is found in the cytoplasm. The protein resides in the cytoskeleton. In terms of biological role, tubulin is the major constituent of microtubules, a cylinder consisting of laterally associated linear protofilaments composed of alpha- and beta-tubulin heterodimers. Microtubules grow by the addition of GTP-tubulin dimers to the microtubule end, where a stabilizing cap forms. Below the cap, tubulin dimers are in GDP-bound state, owing to GTPase activity of alpha-tubulin. This is Tubulin beta chain from Trichuris trichiura (Whipworm).